The sequence spans 235 residues: MLLNTPAQLSLPLYLPDDETFASFYPGENPSLLAAIQSAVHQPHGSYIYFWSREGGGRSHLLHAACAELSQQGEAVGYVPLDKRAYFIPEVLEGMEQLALVCIDNIECIAGDEQWEMAMFNLYNRIVETGRTRLLITGDRPPRQLNLGLPDLASRLDWGQIYKLQPLSDDEKLQALQLRAKLRGFELPEDVGRFLLKRLDREMRTLFMTLDQLDRASITAQRKLTIPFVKEILSL.

It belongs to the DnaA family. HdA subfamily. In terms of assembly, the active form seems to be an ADP-bound monomer. Forms the RIDA complex (regulatory inactivation of DnaA) of ATP-DnaA, ADP-Hda and the DNA-loaded beta sliding clamp (dnaN).

Functionally, mediates the interaction of DNA replication initiator protein DnaA with DNA polymerase subunit beta sliding clamp (dnaN). Stimulates hydrolysis of ATP-DnaA to ADP-DnaA, rendering DnaA inactive for reinitiation, a process called regulatory inhibition of DnaA or RIDA. This is DnaA regulatory inactivator Hda from Yersinia pestis bv. Antiqua (strain Antiqua).